The primary structure comprises 93 residues: MTKGNYSYPLDPSWSTEEITTVLHFLSQVEKAYESKVDRDQLLEAYKAFKTVVPGKASEKQLDKAFQEASGFSTYQAVRAAKAKEKGFVTLGK.

This sequence belongs to the UPF0223 family.

This Streptococcus thermophilus (strain CNRZ 1066) protein is UPF0223 protein str0998.